A 357-amino-acid polypeptide reads, in one-letter code: DNA integrity scanning protein DisA (357 aa).

In terms of domain architecture, DAC spans 8 to 146 (VKSMINILQL…GNLRYTLKDI (139 aa)). ATP contacts are provided by residues Gly-75, Leu-93, and 106–110 (MRHRT).

This sequence belongs to the DisA family. As to quaternary structure, homooctamer. It depends on Mg(2+) as a cofactor.

It catalyses the reaction 2 ATP = 3',3'-c-di-AMP + 2 diphosphate. Functionally, participates in a DNA-damage check-point that is active prior to asymmetric division when DNA is damaged. DisA forms globular foci that rapidly scan along the chromosomes during sporulation, searching for lesions. When a lesion is present, DisA pauses at the lesion site. This triggers a cellular response that culminates in a temporary block in sporulation initiation. Its function is as follows. Also has diadenylate cyclase activity, catalyzing the condensation of 2 ATP molecules into cyclic di-AMP (c-di-AMP). c-di-AMP acts as a signaling molecule that couples DNA integrity with progression of sporulation. The rise in c-di-AMP level generated by DisA while scanning the chromosome, operates as a positive signal that advances sporulation; upon encountering a lesion, the DisA focus arrests at the damaged site and halts c-di-AMP synthesis. In Bacillus cereus (strain AH187), this protein is DNA integrity scanning protein DisA.